Here is a 773-residue protein sequence, read N- to C-terminus: Membrane-bound aldehyde dehydrogenase [pyrroloquinoline-quinone] (773 aa).

A signal peptide (tat-type signal) is located at residues 1-44; that stretch reads MGRLNRFRLGKDGRREQASLSRRGFLVTSLGAGVMFGFARPSSA.

Pyrroloquinoline quinone serves as cofactor. In terms of processing, predicted to be exported by the Tat system. The position of the signal peptide cleavage has been experimentally proven.

It localises to the cell inner membrane. It carries out the reaction an aldehyde + a quinone + H2O = a quinol + a carboxylate + H(+). This chain is Membrane-bound aldehyde dehydrogenase [pyrroloquinoline-quinone], found in Gluconacetobacter polyoxogenes (Acetobacter polyoxogenes).